Consider the following 151-residue polypeptide: Abdominal ganglion neuropeptide L11 (151 aa).

The first 25 residues, 1 to 25, serve as a signal peptide directing secretion; that stretch reads MPCTPNSHRLLLVTALCLLITSLFA.

It is found in the secreted. This is Abdominal ganglion neuropeptide L11 from Aplysia californica (California sea hare).